The sequence spans 139 residues: 3-hydroxyacyl-[acyl-carrier-protein] dehydratase FabZ (139 aa).

His-46 is an active-site residue.

It belongs to the thioester dehydratase family. FabZ subfamily.

It is found in the cytoplasm. The enzyme catalyses a (3R)-hydroxyacyl-[ACP] = a (2E)-enoyl-[ACP] + H2O. In terms of biological role, involved in unsaturated fatty acids biosynthesis. Catalyzes the dehydration of short chain beta-hydroxyacyl-ACPs and long chain saturated and unsaturated beta-hydroxyacyl-ACPs. This is 3-hydroxyacyl-[acyl-carrier-protein] dehydratase FabZ from Petrotoga mobilis (strain DSM 10674 / SJ95).